The sequence spans 647 residues: Endogenous retrovirus group K member 8 Gag polyprotein (647 aa).

The N-myristoyl glycine moiety is linked to residue Gly-2. Residues Gly-165–Leu-264 form a disordered region. Residues Gly-232–Pro-247 show a composition bias toward pro residues. CCHC-type zinc fingers lie at residues Gly-544 to Val-561 and Asp-580 to Ser-597. The tract at residues Lys-598–Cys-641 is disordered. The segment covering Gln-604 to Gly-622 has biased composition (polar residues).

It belongs to the beta type-B retroviral Gag protein family. HERV class-II K(HML-2) gag subfamily. In terms of processing, myristoylation is essential for retroviral assembly. Alteration of the glycine residue leads to a block in the budding of particles and an accumulation of Gag inside the cell. Post-translationally, specific enzymatic cleavages may yield mature proteins.

The protein localises to the cell membrane. Its function is as follows. The products of the Gag polyproteins of infectious retroviruses perform highly complex orchestrated tasks during the assembly, budding, maturation, and infection stages of the viral replication cycle. During viral assembly, the proteins form membrane associations and self-associations that ultimately result in budding of an immature virion from the infected cell. Gag precursors also function during viral assembly to selectively bind and package two plus strands of genomic RNA. Endogenous Gag proteins may have kept, lost or modified their original function during evolution. This chain is Endogenous retrovirus group K member 8 Gag polyprotein (ERVK-8), found in Homo sapiens (Human).